The chain runs to 117 residues: Fluoride-specific ion channel FluC 2 (117 aa).

The next 2 helical transmembrane spans lie at 1–21 (MISI…RSAI) and 46–66 (FLIG…AFFV). Residues Gly-71 and Thr-74 each coordinate Na(+). A helical membrane pass occupies residues 95 to 115 (LFLNYSLLQFIIGFIACYIGY).

Belongs to the fluoride channel Fluc/FEX (TC 1.A.43) family.

It localises to the cell membrane. The enzyme catalyses fluoride(in) = fluoride(out). Its activity is regulated as follows. Na(+) is not transported, but it plays an essential structural role and its presence is essential for fluoride channel function. Fluoride-specific ion channel. Important for reducing fluoride concentration in the cell, thus reducing its toxicity. The chain is Fluoride-specific ion channel FluC 2 from Staphylococcus aureus (strain NCTC 8325 / PS 47).